Here is a 50-residue protein sequence, read N- to C-terminus: Large ribosomal subunit protein bL33A (50 aa).

It belongs to the bacterial ribosomal protein bL33 family.

This chain is Large ribosomal subunit protein bL33A, found in Streptococcus thermophilus (strain CNRZ 1066).